A 252-amino-acid polypeptide reads, in one-letter code: Putative phosphonates utilization ATP-binding protein PhnK (252 aa).

Positions 6-246 constitute an ABC transporter domain; it reads LSVNNLTHLY…PHHPYTQLLV (241 aa). 38–45 is a binding site for ATP; sequence GESGSGKT.

This sequence belongs to the ABC transporter superfamily. As to quaternary structure, forms a complex with PhnG, PhnH, PhnI and PhnJ with the suggested composition PhnG(4)H(2)I(2)J(2)K.

Its function is as follows. Belongs to an operon involved in alkylphosphonate uptake and C-P lyase. Exact function not known. PhnK is not required for the ribophosphonate triphosphate (RPnTP) synthase reaction. The protein is Putative phosphonates utilization ATP-binding protein PhnK (phnK) of Escherichia coli (strain K12).